The chain runs to 414 residues: Putative ankyrin repeat protein BB_B28 (414 aa).

ANK repeat units follow at residues 326-355 (NGNP…NINL) and 359-389 (NSQT…NPNI).

The polypeptide is Putative ankyrin repeat protein BB_B28 (Borreliella burgdorferi (strain ATCC 35210 / DSM 4680 / CIP 102532 / B31) (Borrelia burgdorferi)).